Reading from the N-terminus, the 473-residue chain is Cysteine--tRNA ligase (473 aa).

Position 28 (Cys-28) interacts with Zn(2+). The 'HIGH' region motif lies at Pro-30–Asn-40. Zn(2+) is bound by residues Cys-210, His-235, and Glu-239. The short motif at Lys-267 to Ser-271 is the 'KMSKS' region element. Lys-270 is an ATP binding site.

Belongs to the class-I aminoacyl-tRNA synthetase family. As to quaternary structure, monomer. It depends on Zn(2+) as a cofactor.

It is found in the cytoplasm. The catalysed reaction is tRNA(Cys) + L-cysteine + ATP = L-cysteinyl-tRNA(Cys) + AMP + diphosphate. The sequence is that of Cysteine--tRNA ligase from Fusobacterium nucleatum subsp. nucleatum (strain ATCC 25586 / DSM 15643 / BCRC 10681 / CIP 101130 / JCM 8532 / KCTC 2640 / LMG 13131 / VPI 4355).